The primary structure comprises 228 residues: Ribosomal RNA small subunit methyltransferase G (228 aa).

Residues glycine 89, leucine 94, 140–141 (VE), and arginine 159 contribute to the S-adenosyl-L-methionine site.

Belongs to the methyltransferase superfamily. RNA methyltransferase RsmG family.

The protein localises to the cytoplasm. The enzyme catalyses guanosine(527) in 16S rRNA + S-adenosyl-L-methionine = N(7)-methylguanosine(527) in 16S rRNA + S-adenosyl-L-homocysteine. Functionally, specifically methylates the N7 position of guanine in position 527 of 16S rRNA. This chain is Ribosomal RNA small subunit methyltransferase G, found in Burkholderia multivorans (strain ATCC 17616 / 249).